The sequence spans 133 residues: Holo-[acyl-carrier-protein] synthase (133 aa).

Residues Asp8 and Glu57 each contribute to the Mg(2+) site.

It belongs to the P-Pant transferase superfamily. AcpS family. Mg(2+) is required as a cofactor.

The protein resides in the cytoplasm. It catalyses the reaction apo-[ACP] + CoA = holo-[ACP] + adenosine 3',5'-bisphosphate + H(+). In terms of biological role, transfers the 4'-phosphopantetheine moiety from coenzyme A to a Ser of acyl-carrier-protein. This Caulobacter sp. (strain K31) protein is Holo-[acyl-carrier-protein] synthase.